A 92-amino-acid polypeptide reads, in one-letter code: Bombyxin A-4 (92 aa).

The N-terminal stretch at 1–19 is a signal peptide; sequence MKILLAIALMLSTVMWVST. Q20 is modified (pyrrolidone carboxylic acid). 3 disulfide bridges follow: C29–C79, C41–C92, and C78–C83. The propeptide at 50-70 is c peptide like; that stretch reads SGAQFASYGSAWLMPYSEGRG.

It belongs to the insulin family. As to quaternary structure, heterodimer of a B chain and an A chain linked by two disulfide bonds.

The protein resides in the secreted. Functionally, brain peptide responsible for activation of prothoracic glands to produce ecdysone in insects. The chain is Bombyxin A-4 (BBXA4) from Bombyx mori (Silk moth).